The chain runs to 34 residues: Toxin Ptu1 (34 aa).

3 cysteine pairs are disulfide-bonded: C5–C20, C12–C26, and C19–C33.

It is found in the secreted. In terms of biological role, binds reversibly and blocks N-type voltage-gated calcium channels (Cav). In Peirates turpis (Assassin bug), this protein is Toxin Ptu1.